A 1035-amino-acid polypeptide reads, in one-letter code: Valine--tRNA ligase (1035 aa).

The short motif at 45–55 is the 'HIGH' region element; that stretch reads PNVTGALHLGH. Positions 253–281 form a coiled coil; that stretch reads EKLSDANEKEAVDLNKQIEALQKRREERL. Lys-619 is an ATP binding site. Positions 967 to 1035 form a coiled coil; the sequence is DVEAELARLE…QDILKLQSKK (69 aa).

The protein belongs to the class-I aminoacyl-tRNA synthetase family. ValS type 1 subfamily. Monomer.

Its subcellular location is the cytoplasm. It carries out the reaction tRNA(Val) + L-valine + ATP = L-valyl-tRNA(Val) + AMP + diphosphate. Functionally, catalyzes the attachment of valine to tRNA(Val). As ValRS can inadvertently accommodate and process structurally similar amino acids such as threonine, to avoid such errors, it has a 'posttransfer' editing activity that hydrolyzes mischarged Thr-tRNA(Val) in a tRNA-dependent manner. The protein is Valine--tRNA ligase of Rhodopirellula baltica (strain DSM 10527 / NCIMB 13988 / SH1).